A 421-amino-acid chain; its full sequence is Nuclear envelope integral membrane protein 2 (421 aa).

The first 22 residues, 1-22, serve as a signal peptide directing secretion; sequence MLPRLWWLVLWLQPLATLPASA. 6 consecutive transmembrane segments (helical) span residues 64 to 84, 147 to 167, 175 to 195, 206 to 226, 238 to 258, and 281 to 301; these read YMWS…IVYI, NIVD…FLYA, VFYY…FVLL, TFGA…CQLM, MYIL…CYSH, and LVYT…VLLF.

It belongs to the NEMP family. As to expression, in the ovary, highly expressed in somatic cells.

Its subcellular location is the nucleus inner membrane. The chain is Nuclear envelope integral membrane protein 2 (Nemp2) from Mus musculus (Mouse).